Consider the following 504-residue polypeptide: Cytochrome P450 7A1 (504 aa).

Residues 4–24 (TSLIWGIAIAACCCLWLILGI) traverse the membrane as a helical segment. Residue Cys444 coordinates heme.

Belongs to the cytochrome P450 family. Heme serves as cofactor. Detected in liver.

The protein resides in the endoplasmic reticulum membrane. It localises to the microsome membrane. It carries out the reaction cholesterol + reduced [NADPH--hemoprotein reductase] + O2 = 7alpha-hydroxycholesterol + oxidized [NADPH--hemoprotein reductase] + H2O + H(+). The enzyme catalyses 4beta-hydroxycholesterol + reduced [NADPH--hemoprotein reductase] + O2 = 4beta,7alpha-dihydroxycholesterol + oxidized [NADPH--hemoprotein reductase] + H2O + H(+). It catalyses the reaction lathosterol + reduced [NADPH--hemoprotein reductase] + O2 = 7alpha,8alpha-epoxy-5alpha-cholestan-3beta-ol + oxidized [NADPH--hemoprotein reductase] + H2O + H(+). The catalysed reaction is lathosterol + reduced [NADPH--hemoprotein reductase] + O2 = 5alpha-cholestan-7-oxo-3beta-ol + oxidized [NADPH--hemoprotein reductase] + H2O + H(+). It carries out the reaction 7-dehydrocholesterol + reduced [NADPH--hemoprotein reductase] + O2 = 7-oxocholesterol + oxidized [NADPH--hemoprotein reductase] + H2O + H(+). The enzyme catalyses (24S)-hydroxycholesterol + reduced [NADPH--hemoprotein reductase] + O2 = (24S)-7alpha-dihydroxycholesterol + oxidized [NADPH--hemoprotein reductase] + H2O + H(+). It catalyses the reaction (24R)-hydroxycholesterol + reduced [NADPH--hemoprotein reductase] + O2 = (24R)-7alpha-dihydroxycholesterol + oxidized [NADPH--hemoprotein reductase] + H2O + H(+). It participates in lipid metabolism; bile acid biosynthesis. It functions in the pathway steroid metabolism; cholesterol degradation. A cytochrome P450 monooxygenase involved in the metabolism of endogenous cholesterol and its oxygenated derivatives (oxysterols). Mechanistically, uses molecular oxygen inserting one oxygen atom into a substrate, and reducing the second into a water molecule, with two electrons provided by NADPH via cytochrome P450 reductase (CPR; NADPH-ferrihemoprotein reductase). Functions as a critical regulatory enzyme of bile acid biosynthesis and cholesterol homeostasis. Catalyzes the hydroxylation of carbon hydrogen bond at 7-alpha position of cholesterol, a rate-limiting step in cholesterol catabolism and bile acid biosynthesis. 7-alpha hydroxylates several oxysterols, including 4beta-hydroxycholesterol and 24-hydroxycholesterol. Catalyzes the oxidation of the 7,8 double bond of 7-dehydrocholesterol and lathosterol with direct and predominant formation of the 7-keto derivatives. The sequence is that of Cytochrome P450 7A1 from Homo sapiens (Human).